A 344-amino-acid chain; its full sequence is S-adenosylmethionine:tRNA ribosyltransferase-isomerase (344 aa).

It belongs to the QueA family. Monomer.

The protein localises to the cytoplasm. It catalyses the reaction 7-aminomethyl-7-carbaguanosine(34) in tRNA + S-adenosyl-L-methionine = epoxyqueuosine(34) in tRNA + adenine + L-methionine + 2 H(+). It participates in tRNA modification; tRNA-queuosine biosynthesis. Its function is as follows. Transfers and isomerizes the ribose moiety from AdoMet to the 7-aminomethyl group of 7-deazaguanine (preQ1-tRNA) to give epoxyqueuosine (oQ-tRNA). This is S-adenosylmethionine:tRNA ribosyltransferase-isomerase from Heliobacterium modesticaldum (strain ATCC 51547 / Ice1).